The chain runs to 216 residues: Probable GTP-binding protein EngB (216 aa).

An EngB-type G domain is found at 37-214 (QGLEVAFAGR…RAAIIKLVAE (178 aa)). Residues 45–52 (GRSNVGKS), 72–76 (GRTQE), 92–95 (DMPG), 159–162 (TKAD), and 193–195 (TSS) contribute to the GTP site. Residues serine 52 and threonine 74 each coordinate Mg(2+).

It belongs to the TRAFAC class TrmE-Era-EngA-EngB-Septin-like GTPase superfamily. EngB GTPase family. Mg(2+) is required as a cofactor.

Necessary for normal cell division and for the maintenance of normal septation. The sequence is that of Probable GTP-binding protein EngB from Rhodopseudomonas palustris (strain BisA53).